A 323-amino-acid chain; its full sequence is MLTIITHLINPLLYMIPILLAVAFLTLIERKVLGYMQHRKGPNIVGPTGLIQPIADGVKLFIKEPVRPSTSSQTMFLIAPTMALALAMSIWAPLPMPFSLADLNLGILFILALSSLAVYTILGSGWSSNSKYALIGALRAVAQTISYEVTLGLILLCMIMLAGGFTYTTLMTTQEQMWLIIPGWPMAAMWYISTLAETNRAPFDLTEGESELVSGFNVEYAGGPFALFSLAEYANILMMNTLSYLILFLGSSFMNQPELTTISLMIKSSILSMIFLWVRASYPRFRYDQLMHLVWKNFLPITLAMTLWHISLPISMLGLPSQT.

The next 8 membrane-spanning stretches (helical) occupy residues 8–28 (LINPLLYMIPILLAVAFLTLI), 75–95 (MFLIAPTMALALAMSIWAPLP), 105–125 (LGILFILALSSLAVYTILGSG), 151–171 (LGLILLCMIMLAGGFTYTTLM), 177–197 (MWLIIPGWPMAAMWYISTLAE), 234–254 (ANILMMNTLSYLILFLGSSFM), 258–278 (ELTTISLMIKSSILSMIFLWV), and 298–318 (FLPITLAMTLWHISLPISMLG).

Belongs to the complex I subunit 1 family. As to quaternary structure, core subunit of respiratory chain NADH dehydrogenase (Complex I) which is composed of 45 different subunits.

It localises to the mitochondrion inner membrane. It catalyses the reaction a ubiquinone + NADH + 5 H(+)(in) = a ubiquinol + NAD(+) + 4 H(+)(out). Its function is as follows. Core subunit of the mitochondrial membrane respiratory chain NADH dehydrogenase (Complex I) which catalyzes electron transfer from NADH through the respiratory chain, using ubiquinone as an electron acceptor. Essential for the catalytic activity and assembly of complex I. The protein is NADH-ubiquinone oxidoreductase chain 1 (mt-nd1) of Xenopus laevis (African clawed frog).